Here is a 443-residue protein sequence, read N- to C-terminus: Xaa-Pro dipeptidase (443 aa).

Residues D246, D257, H339, E384, and E423 each contribute to the Mn(2+) site.

Belongs to the peptidase M24B family. Bacterial-type prolidase subfamily. Mn(2+) is required as a cofactor.

The enzyme catalyses Xaa-L-Pro dipeptide + H2O = an L-alpha-amino acid + L-proline. Its function is as follows. Splits dipeptides with a prolyl residue in the C-terminal position. This chain is Xaa-Pro dipeptidase, found in Salmonella paratyphi B (strain ATCC BAA-1250 / SPB7).